A 1214-amino-acid chain; its full sequence is Filamin-A-interacting protein 1 (1214 aa).

Positions 1–15 (MRSRNQGGESSSNGH) are enriched in polar residues. Residues 1-73 (MRSRNQGGES…ESEKKTKKPL (73 aa)) form a disordered region. 2 stretches are compositionally biased toward basic and acidic residues: residues 32 to 47 (PSED…KGED) and 61 to 73 (PSGE…KKPL). At Ser138 the chain carries Phosphoserine. 2 coiled-coil regions span residues 192–581 (DYMN…KLRS) and 624–778 (PEDN…ELEL). Disordered stretches follow at residues 875 to 898 (KREN…GHPG) and 949 to 976 (KPRI…GPER). Residue Ser979 is modified to Phosphoserine. The interval 1104–1192 (VSTGTVLRSP…TKFQPRAETQ (89 aa)) is disordered. A compositionally biased stretch (low complexity) spans 1126 to 1140 (VTSTITITPVTTSST). Residues 1141–1157 (RGTQSVSGQDGSSQRPT) are compositionally biased toward polar residues. Residues 1169–1180 (AGKPVVAAPGAG) show a composition bias toward low complexity.

It belongs to the FILIP1 family. Interacts with FLNA. Interacts with RHOD (in GTP-bound form).

It is found in the cytoplasm. The protein resides in the cytoskeleton. In terms of biological role, by acting through a filamin-A/F-actin axis, it controls the start of neocortical cell migration from the ventricular zone. May be able to induce the degradation of filamin-A. This Mus musculus (Mouse) protein is Filamin-A-interacting protein 1 (Filip1).